The chain runs to 490 residues: Aspartyl/glutamyl-tRNA(Asn/Gln) amidotransferase subunit B (490 aa).

Belongs to the GatB/GatE family. GatB subfamily. As to quaternary structure, heterotrimer of A, B and C subunits.

The enzyme catalyses L-glutamyl-tRNA(Gln) + L-glutamine + ATP + H2O = L-glutaminyl-tRNA(Gln) + L-glutamate + ADP + phosphate + H(+). It carries out the reaction L-aspartyl-tRNA(Asn) + L-glutamine + ATP + H2O = L-asparaginyl-tRNA(Asn) + L-glutamate + ADP + phosphate + 2 H(+). In terms of biological role, allows the formation of correctly charged Asn-tRNA(Asn) or Gln-tRNA(Gln) through the transamidation of misacylated Asp-tRNA(Asn) or Glu-tRNA(Gln) in organisms which lack either or both of asparaginyl-tRNA or glutaminyl-tRNA synthetases. The reaction takes place in the presence of glutamine and ATP through an activated phospho-Asp-tRNA(Asn) or phospho-Glu-tRNA(Gln). The protein is Aspartyl/glutamyl-tRNA(Asn/Gln) amidotransferase subunit B of Synechococcus sp. (strain JA-3-3Ab) (Cyanobacteria bacterium Yellowstone A-Prime).